The chain runs to 439 residues: Probable N-acetylmuramidase (439 aa).

Residues 1–57 form the signal peptide; sequence MPVSRIKVKNRHLKKKAKKPLAFYKPATKFAGAVLIAGTLTTTHELLLQQTSPMVQA. 2 disordered regions span residues 218 to 241 and 287 to 320; these read SAGTSNSGGSTATNTNNNSNTSST and SSSSSNTNSSTSSGNSAGTTTPTTSVTPAKPASQ. The LysM 1 domain maps to 241–284; that stretch reads TTYTVKSGDTLWGISQKYGISVAQIQSANNLKSTVIYIGQKLVL. Over residues 287–319 the composition is skewed to low complexity; sequence SSSSSNTNSSTSSGNSAGTTTPTTSVTPAKPAS. The 44-residue stretch at 321-364 folds into the LysM 2 domain; sequence TTIKVKSGDTLWGLSVKYKTTIAQLKSWNHLNSDTIFIGQNLIV. Residues 372-393 are disordered; sequence SSSTGSSSASTSSTSNSSAASN. The LysM 3 domain maps to 395–438; that stretch reads SIHKVVKGDTLWGLSQKSGSPIASIKAWNHLSSDTILIGQYLRI.

It belongs to the glycosyl hydrolase 73 family.

The protein localises to the secreted. The enzyme catalyses Hydrolysis of (1-&gt;4)-beta-linkages between N-acetylmuramic acid and N-acetyl-D-glucosamine residues in a peptidoglycan and between N-acetyl-D-glucosamine residues in chitodextrins.. Required for cell separation during growth. This chain is Probable N-acetylmuramidase (acmA), found in Lactococcus lactis subsp. lactis (strain IL1403) (Streptococcus lactis).